Reading from the N-terminus, the 681-residue chain is Envelope glycoprotein (681 aa).

Residues 1–18 (MKTTCLFISLILIQGIKT) form the signal peptide. Over 19–648 (LPILEIASNN…GLGGKWWTSD (630 aa)) the chain is Extracellular. A receptor-binding region spans residues 38–188 (SGTLQKTEDV…FSRQGQGYRH (151 aa)). N-linked (GlcNAc...) asparagine; by host glycans are attached at residues Asn94, Asn171, Asn190, Asn202, Asn207, Asn219, Asn223, and Asn255. Residues 223 to 351 (NQTCAPSKIP…STNNTSKNNF (129 aa)) form a disordered region. Over residues 244–259 (PTSTPTDATTLNTTDP) the composition is skewed to low complexity. Positions 277 to 455 (EPYTTSDAVT…PFLDGLINAP (179 aa)) are mucin-like region. Composition is skewed to polar residues over residues 278–290 (PYTT…KQGL) and 308–341 (EGNN…TTAI). N-linked (GlcNAc...) asparagine; by host glycosylation is found at Asn310, Asn323, Asn326, Asn337, Asn344, Asn345, Asn350, Asn360, Asn389, Asn397, Asn408, and Asn487. A compositionally biased stretch (low complexity) spans 342–351 (STNNTSKNNF). The segment covering 366-414 (TQSTATENEQTSAPSKTTLPPTGNLTTAKSTNNTKGPTTTAPNMTNGHL) has biased composition (polar residues). The segment at 366-425 (TQSTATENEQTSAPSKTTLPPTGNLTTAKSTNNTKGPTTTAPNMTNGHLTSPSPTPNPTT) is disordered. The segment at 529–549 (GLSWIPFFGPGIEGLYTAGLI) is fusion peptide. N-linked (GlcNAc...) asparagine; by host glycosylation is found at Asn564 and Asn619. The helical transmembrane segment at 649–669 (WGVLTNLGILLLLSIAVLIAL) threads the bilayer. The Cytoplasmic portion of the chain corresponds to 670–681 (SCICRIFTKYIG). S-palmitoyl cysteine; by host attachment occurs at residues Cys671 and Cys673.

Belongs to the filoviruses glycoprotein family. As to quaternary structure, homotrimer; each monomer consists of a GP1 and a GP2 subunit linked by disulfide bonds. The resulting peplomers (GP1,2) protrude from the virus surface as spikes. GP1,2 interacts with human CD209 and CLEC4M (collectively referred to as DC-SIGN(R)). Asialoglycoprotein receptor (ASGP-R) may be a liver-specific receptor for GP1,2. Members of the Tyro3 receptor tyrosine kinase family may be cell entry factors interacting with GP1,2. Post-translationally, N-glycosylated. In terms of processing, O-glycosylated in the mucin-like region. Specific enzymatic cleavages in vivo yield mature proteins. The precursor is processed into GP1 and GP2 by host cell furin in the trans Golgi, and maybe by other host proteases, to yield the mature GP1 and GP2 proteins. The cleavage site corresponds to the furin optimal cleavage sequence [KR]-X-[KR]-R. Post-translationally, GP1 is phosphorylated on serine residues between residues 260 and 273.

It localises to the virion membrane. The protein localises to the host cell membrane. Its function is as follows. GP1 is responsible for binding to the receptor(s) on target cells. Interacts with CD209/DC-SIGN and CLEC4M/DC-SIGNR which act as cofactors for virus entry into the host cell. Binding to CD209 and CLEC4M, which are respectively found on dendritic cells (DCs), and on endothelial cells of liver sinusoids and lymph node sinuses, facilitate infection of macrophages and endothelial cells. These interactions not only facilitate virus cell entry, but also allow capture of viral particles by DCs and subsequent transmission to susceptible cells without DCs infection (trans infection). GP2 acts as a class I viral fusion protein. Under the current model, the protein has at least 3 conformational states: pre-fusion native state, pre-hairpin intermediate state, and post-fusion hairpin state. During viral and target cell membrane fusion, the coiled coil regions (heptad repeats) assume a trimer-of-hairpins structure, positioning the fusion peptide in close proximity to the C-terminal region of the ectodomain. The formation of this structure appears to drive apposition and subsequent fusion of viral and target cell membranes. Responsible for penetration of the virus into the cell cytoplasm by mediating the fusion of the membrane of the endocytosed virus particle with the endosomal membrane. Low pH in endosomes induces an irreversible conformational change in GP2, releasing the fusion hydrophobic peptide. This Lake Victoria marburgvirus (strain Popp-67) (MARV) protein is Envelope glycoprotein (GP).